A 53-amino-acid chain; its full sequence is uncharacterized protein (53 aa).

Belongs to the ycf15 family.

It is found in the plastid. The protein localises to the chloroplast. This is an uncharacterized protein from Helianthus annuus (Common sunflower).